A 419-amino-acid chain; its full sequence is UDP-N-acetylglucosamine 1-carboxyvinyltransferase (419 aa).

22–23 contacts phosphoenolpyruvate; the sequence is KN. UDP-N-acetyl-alpha-D-glucosamine is bound at residue R91. C115 acts as the Proton donor in catalysis. A 2-(S-cysteinyl)pyruvic acid O-phosphothioketal modification is found at C115. UDP-N-acetyl-alpha-D-glucosamine is bound by residues 120–124, 160–163, D305, and V327; these read RPVDL and KVSV.

Belongs to the EPSP synthase family. MurA subfamily.

It localises to the cytoplasm. The catalysed reaction is phosphoenolpyruvate + UDP-N-acetyl-alpha-D-glucosamine = UDP-N-acetyl-3-O-(1-carboxyvinyl)-alpha-D-glucosamine + phosphate. The protein operates within cell wall biogenesis; peptidoglycan biosynthesis. Its function is as follows. Cell wall formation. Adds enolpyruvyl to UDP-N-acetylglucosamine. This Salmonella schwarzengrund (strain CVM19633) protein is UDP-N-acetylglucosamine 1-carboxyvinyltransferase.